Consider the following 423-residue polypeptide: Serine hydroxymethyltransferase (423 aa).

(6S)-5,6,7,8-tetrahydrofolate is bound by residues leucine 120 and 124–126 (GHL). The residue at position 229 (lysine 229) is an N6-(pyridoxal phosphate)lysine. Residue 353-355 (SPF) participates in (6S)-5,6,7,8-tetrahydrofolate binding.

It belongs to the SHMT family. Homodimer. The cofactor is pyridoxal 5'-phosphate.

Its subcellular location is the cytoplasm. The catalysed reaction is (6R)-5,10-methylene-5,6,7,8-tetrahydrofolate + glycine + H2O = (6S)-5,6,7,8-tetrahydrofolate + L-serine. The protein operates within one-carbon metabolism; tetrahydrofolate interconversion. It participates in amino-acid biosynthesis; glycine biosynthesis; glycine from L-serine: step 1/1. Functionally, catalyzes the reversible interconversion of serine and glycine with tetrahydrofolate (THF) serving as the one-carbon carrier. This reaction serves as the major source of one-carbon groups required for the biosynthesis of purines, thymidylate, methionine, and other important biomolecules. Also exhibits THF-independent aldolase activity toward beta-hydroxyamino acids, producing glycine and aldehydes, via a retro-aldol mechanism. The protein is Serine hydroxymethyltransferase of Prochlorococcus marinus (strain MIT 9301).